The primary structure comprises 471 residues: Protein naked cuticle homolog 1 (471 aa).

Disordered regions lie at residues 1 to 23 and 41 to 82; these read MGKL…GDSF and QRCP…DEDD. Gly2 carries the N-myristoyl glycine lipid modification. Residues 62-75 show a composition bias toward basic and acidic residues; that stretch reads GTRELVGDTSREAL. Positions 125–190 are interaction with DVL1, DVL2 and DVL3; that stretch reads QCDVSVEEDS…LRVKLTVAPD (66 aa). The EF-hand domain occupies 131–166; sequence EEDSRQEWTFTLYDFDNNGKVTREDITSLLHTIYEV. Positions 144, 146, 148, 150, and 155 each coordinate Ca(2+). 3 disordered regions span residues 273 to 314, 337 to 382, and 448 to 471; these read GPGS…QGVD, GTQD…SPSA, and QAVQ…FYQP. Positions 453-471 are enriched in basic residues; sequence HEHHHHHEHHHHYHHFYQP.

This sequence belongs to the NKD family. Interacts with DVL1, DVL2, DVL3 and PPP2R3A. As to expression, highly expressed in lung. Also expressed in brain, heart, kidney, liver, skin, stomach and testis. Within the testis expression is found in the seminiferous epithelium and round and elongating spermatids.

It is found in the cell membrane. Its subcellular location is the cytoplasm. In terms of biological role, cell autonomous antagonist of the canonical Wnt signaling pathway. May activate a second Wnt signaling pathway that controls planar cell polarity. Required for spermatogenesis. The sequence is that of Protein naked cuticle homolog 1 (Nkd1) from Mus musculus (Mouse).